A 498-amino-acid polypeptide reads, in one-letter code: GTPase Der (498 aa).

EngA-type G domains lie at 3-167 and 210-383; these read PVVA…FDDL and IKLA…KSAT. GTP contacts are provided by residues 9 to 16, 57 to 61, 119 to 122, 216 to 223, 263 to 267, and 328 to 331; these read GRPNVGKS, DTGGI, NKID, DTAGV, and NKWD. The KH-like domain maps to 384 to 468; the sequence is TRVGTSVLTR…PIRINFQNSD (85 aa).

This sequence belongs to the TRAFAC class TrmE-Era-EngA-EngB-Septin-like GTPase superfamily. EngA (Der) GTPase family. As to quaternary structure, associates with the 50S ribosomal subunit.

GTPase that plays an essential role in the late steps of ribosome biogenesis. The polypeptide is GTPase Der (Vibrio campbellii (strain ATCC BAA-1116)).